An 863-amino-acid chain; its full sequence is Chromatin assembly factor 1 subunit A (863 aa).

Disordered regions lie at residues 1–353, 423–466, 513–579, and 749–863; these read MVVV…EEKD, LNGL…PDRS, DSDE…RQRM, and VTRD…PATA. Basic and acidic residues predominate over residues 42–54; sequence LNPEPKECNEPKR. Thr-111 bears the Phosphothreonine mark. Ser-118 carries the post-translational modification Phosphoserine. Over residues 144–154 the composition is skewed to low complexity; the sequence is SEGTTEPTIPL. 2 stretches are compositionally biased toward acidic residues: residues 155 to 168 and 177 to 196; these read TEEE…EDVD and QDSD…EQQQ. Residues 205 to 237 show a composition bias toward low complexity; sequence ESVLSTGSTSSASVIASSPEPSKSAPTTPASTS. 2 stretches are compositionally biased toward basic and acidic residues: residues 254–353 and 457–466; these read QEQE…EEKD and QKADDGPDRS. Acidic residues-rich tracts occupy residues 513-524 and 532-547; these read DSDEEWEEEEPG and GDDD…DDDG. Residues 569 to 579 show a composition bias toward basic and acidic residues; the sequence is DPEKQKVRQRM. The span at 760–771 shows a compositional bias: low complexity; it reads NSPTTNSSTTPS. A compositionally biased stretch (acidic residues) spans 806–815; sequence DTEDDEDDDC. Positions 821–835 are enriched in polar residues; that stretch reads QSGSSEQDINTSLPQ. Residues 850–863 show a composition bias toward low complexity; the sequence is TAALALPCPTPATA.

The protein belongs to the CHAF1A family.

It localises to the nucleus. In terms of biological role, acts as a component of the histone chaperone complex chromatin assembly factor 1 (CAF-1), which assembles histone octamers onto DNA during replication and repair. CAF-1 performs the first step of the nucleosome assembly process, bringing newly synthesized histones H3 and H4 to replicating DNA; histones H2A/H2B can bind to this chromatin precursor subsequent to DNA replication to complete the histone octamer. The polypeptide is Chromatin assembly factor 1 subunit A (chaf1a) (Danio rerio (Zebrafish)).